The primary structure comprises 504 residues: Lysine--tRNA ligase (504 aa).

Mg(2+) contacts are provided by glutamate 404 and glutamate 411.

It belongs to the class-II aminoacyl-tRNA synthetase family. As to quaternary structure, homodimer. Mg(2+) is required as a cofactor.

Its subcellular location is the cytoplasm. It carries out the reaction tRNA(Lys) + L-lysine + ATP = L-lysyl-tRNA(Lys) + AMP + diphosphate. The sequence is that of Lysine--tRNA ligase from Aliarcobacter butzleri (strain RM4018) (Arcobacter butzleri).